A 358-amino-acid chain; its full sequence is Cyclin-dependent kinase 10 (358 aa).

The region spanning 37-321 (FEKLNRIGEG…AGDCLESSYF (285 aa)) is the Protein kinase domain. Residues 43-51 (IGEGTYGIV) and Lys66 contribute to the ATP site. The active-site Proton acceptor is Asp161. Residue Thr194 is modified to Phosphothreonine. Positions 332 to 358 (LMPTFPHHRNKRAAPAATEGQSKRCRP) are disordered.

Belongs to the protein kinase superfamily. CMGC Ser/Thr protein kinase family. CDC2/CDKX subfamily. As to quaternary structure, heterodimer with CCNQ, the interaction is required for kinase activity. Interacts with ETS2. Interacts with PRK2.

The protein localises to the cytoplasm. It is found in the cytoskeleton. It localises to the cilium basal body. It catalyses the reaction L-seryl-[protein] + ATP = O-phospho-L-seryl-[protein] + ADP + H(+). It carries out the reaction L-threonyl-[protein] + ATP = O-phospho-L-threonyl-[protein] + ADP + H(+). Functionally, cyclin-dependent kinase that phosphorylates the transcription factor ETS2 (in vitro) and positively controls its proteasomal degradation (in cells). Involved in the regulation of actin cytoskeleton organization through the phosphorylation of actin dynamics regulators such as PKN2. Is a negative regulator of ciliogenesis through phosphorylation of PKN2 and promotion of RhoA signaling. The polypeptide is Cyclin-dependent kinase 10 (Cdk10) (Rattus norvegicus (Rat)).